A 692-amino-acid polypeptide reads, in one-letter code: DNA ligase (692 aa).

The span at Met1–Ala14 shows a compositional bias: polar residues. A disordered region spans residues Met1 to Ala27. Residues Asp54–Asp58, Ser103–Leu104, and Glu134 each bind NAD(+). The active-site N6-AMP-lysine intermediate is the Lys136. NAD(+) is bound by residues Arg157, Glu194, Lys311, and Lys335. Cys429, Cys432, Cys447, and Cys454 together coordinate Zn(2+). Residues Asn612–Glu692 form the BRCT domain.

Belongs to the NAD-dependent DNA ligase family. LigA subfamily. Requires Mg(2+) as cofactor. Mn(2+) is required as a cofactor.

It catalyses the reaction NAD(+) + (deoxyribonucleotide)n-3'-hydroxyl + 5'-phospho-(deoxyribonucleotide)m = (deoxyribonucleotide)n+m + AMP + beta-nicotinamide D-nucleotide.. Functionally, DNA ligase that catalyzes the formation of phosphodiester linkages between 5'-phosphoryl and 3'-hydroxyl groups in double-stranded DNA using NAD as a coenzyme and as the energy source for the reaction. It is essential for DNA replication and repair of damaged DNA. This Janthinobacterium sp. (strain Marseille) (Minibacterium massiliensis) protein is DNA ligase.